Reading from the N-terminus, the 122-residue chain is Large ribosomal subunit protein uL14c (122 aa).

This sequence belongs to the universal ribosomal protein uL14 family. In terms of assembly, part of the 50S ribosomal subunit.

It localises to the plastid. Its function is as follows. Binds to 23S rRNA. This is Large ribosomal subunit protein uL14c from Cuscuta exaltata (Tall dodder).